The chain runs to 88 residues: Small ribosomal subunit protein uS15 (88 aa).

It belongs to the universal ribosomal protein uS15 family. In terms of assembly, part of the 30S ribosomal subunit. Forms a bridge to the 50S subunit in the 70S ribosome, contacting the 23S rRNA.

One of the primary rRNA binding proteins, it binds directly to 16S rRNA where it helps nucleate assembly of the platform of the 30S subunit by binding and bridging several RNA helices of the 16S rRNA. Its function is as follows. Forms an intersubunit bridge (bridge B4) with the 23S rRNA of the 50S subunit in the ribosome. The chain is Small ribosomal subunit protein uS15 from Leptospira borgpetersenii serovar Hardjo-bovis (strain JB197).